We begin with the raw amino-acid sequence, 290 residues long: Phosphatidylglycerol--prolipoprotein diacylglyceryl transferase (290 aa).

The next 7 membrane-spanning stretches (helical) occupy residues 21–41 (VSLH…MWLA), 60–80 (LLYA…VLFY), 96–116 (WDGG…MLWF), 124–144 (FFQV…AGRL), 199–219 (SQLY…NVFI), 226–246 (GSVS…VECF), and 260–280 (ISMG…MMIW). An a 1,2-diacyl-sn-glycero-3-phospho-(1'-sn-glycerol)-binding site is contributed by arginine 143.

The protein belongs to the Lgt family.

It localises to the cell inner membrane. The catalysed reaction is L-cysteinyl-[prolipoprotein] + a 1,2-diacyl-sn-glycero-3-phospho-(1'-sn-glycerol) = an S-1,2-diacyl-sn-glyceryl-L-cysteinyl-[prolipoprotein] + sn-glycerol 1-phosphate + H(+). Its pathway is protein modification; lipoprotein biosynthesis (diacylglyceryl transfer). Functionally, catalyzes the transfer of the diacylglyceryl group from phosphatidylglycerol to the sulfhydryl group of the N-terminal cysteine of a prolipoprotein, the first step in the formation of mature lipoproteins. The sequence is that of Phosphatidylglycerol--prolipoprotein diacylglyceryl transferase from Yersinia pseudotuberculosis serotype O:1b (strain IP 31758).